Here is a 1181-residue protein sequence, read N- to C-terminus: DNA-directed RNA polymerase subunit beta' (1181 aa).

Zn(2+) contacts are provided by Cys-68, Cys-70, Cys-83, and Cys-86. Positions 457, 459, and 461 each coordinate Mg(2+). The Zn(2+) site is built by Cys-802, Cys-876, Cys-883, and Cys-886.

It belongs to the RNA polymerase beta' chain family. In terms of assembly, the RNAP catalytic core consists of 2 alpha, 1 beta, 1 beta' and 1 omega subunit. When a sigma factor is associated with the core the holoenzyme is formed, which can initiate transcription. The cofactor is Mg(2+). It depends on Zn(2+) as a cofactor.

The enzyme catalyses RNA(n) + a ribonucleoside 5'-triphosphate = RNA(n+1) + diphosphate. In terms of biological role, DNA-dependent RNA polymerase catalyzes the transcription of DNA into RNA using the four ribonucleoside triphosphates as substrates. The sequence is that of DNA-directed RNA polymerase subunit beta' from Syntrophomonas wolfei subsp. wolfei (strain DSM 2245B / Goettingen).